The following is a 759-amino-acid chain: MGSASEQRVTLTNADKVLYPATGTTKSDIFDYYAGVAEVMLGHIAGRPATRKRWPNGVDQPAFFEKQLALSAPPWLSRATVAHRSGTTTYPIIDSATGLAWIAQQAALEVHVPQWRFVAEPGSGELNPGPATRLVFDLDPGEGVMMAQLAEVARAVRDLLADIGLVTFPVTSGSKGLHLYTPLDEPVSSRGATVLAKRVAQRLEQAMPALVTSTMTKSLRAGKVFVDWSQNSGSKTTIAPYSLRGRTHPTVAAPRTWAELDDPALRQLSYDEVLTRIARDGDLLERLDADAPVADRLTRYRRMRDASKTPEPIPTAKPVTGDGNTFVIQEHHARRPHYDFRLERDGVLVSWAVPKNLPDNTSVNHLAIHTEDHPLEYATFEGAIPSGEYGAGKVIIWDSGTYDTEKFHDDPHTGEVIVNLHGGRISGRYALIRTNGDRWLAHRLKNQKDQKVFEFDNLAPMLATHGTVAGLKASQWAFEGKWDGYRLLVEADHGAVRLRSRSGRDVTAEYPQLRALAEDLADHHVVLDGEAVVLDSSGVPSFSQMQNRGRDTRVEFWAFDLLYLDGRALLGTRYQDRRKLLETLANATSLTVPELLPGDGAQAFACSRKHGWEGVIAKRRDSRYQPGRRCASWVKDKHWNTQEVVIGGWRAGEGGRSSGVGSLLMGIPGPGGLQFAGRVGTGLSERELANLKEMLAPLHTDESPFDVPLPARDAKGITYVKPALVAEVRYSEWTPEGRLRQSSWRGLRPDKKPSEVVRE.

Residues 9–261 are DNA repair polymerase domain (Pol); sequence VTLTNADKVL…AAPRTWAELD (253 aa). 2 DNA-binding regions span residues 13–16 and lysine 26; that span reads NADK. Residue lysine 52 participates in substrate binding. 5 DNA-binding regions span residues 53–55, 63–67, serine 71, 83–88, and glutamine 104; these read RWP, FFEKQ, and HRSGTT. Substrate contacts are provided by residues histidine 111, 137 to 139, and 172 to 178; these read DLD and SGSKGLH. The Mn(2+) site is built by aspartate 137 and aspartate 139. Mn(2+) is bound at residue aspartate 227. Glutamine 230 contacts substrate. A DNA-binding region spans residues 234 to 235; it reads SK. Residues threonine 236 and arginine 244 each contribute to the substrate site. Positions 297–446 are 3'-phosphoesterase domain (PE); sequence LTRYRRMRDA…DRWLAHRLKN (150 aa). Mn(2+)-binding residues include histidine 331, histidine 337, and aspartate 339. A ligase domain (Lig) region spans residues 460–757; sequence PMLATHGTVA…RPDKKPSEVV (298 aa). The active-site N6-AMP-lysine intermediate is lysine 481. Mn(2+)-binding residues include aspartate 483 and glutamate 613. Positions 740–759 are disordered; it reads RQSSWRGLRPDKKPSEVVRE. Over residues 747–759 the composition is skewed to basic and acidic residues; that stretch reads LRPDKKPSEVVRE.

The protein in the N-terminal section; belongs to the LigD polymerase family. This sequence in the central section; belongs to the LigD 3'-phosphoesterase family. In the C-terminal section; belongs to the ATP-dependent DNA ligase family. Interacts with Ku. The cofactor is Mn(2+).

The enzyme catalyses ATP + (deoxyribonucleotide)n-3'-hydroxyl + 5'-phospho-(deoxyribonucleotide)m = (deoxyribonucleotide)n+m + AMP + diphosphate.. In terms of biological role, with Ku forms a non-homologous end joining (NHEJ) DNA repair enzyme which repairs DNA double strand breaks (DSB) with reduced fidelity. Ligates dsDNA, repairs incompatible DSB which require 3'-resection, gap filling and ligation. Has several activities; DNA-directed DNA or RNA polymerase on 5'-overhangs, terminal transferase (extending ssDNA or blunt dsDNA in a non-templated fashion, preferentially with rNTPs), DNA-dependent RNA primase (synthesizes short RNAs on unprimed closed ssDNA) and 3'-phosphoesterase on ssDNA. Functionally, the preference of the polymerase domain for rNTPs over dNTPs may be advantageous in dormant cells, where the dNTP pool may be limiting. This chain is Multifunctional non-homologous end joining protein LigD (ligD), found in Mycobacterium bovis (strain ATCC BAA-935 / AF2122/97).